A 299-amino-acid chain; its full sequence is ATP phosphoribosyltransferase (299 aa).

It belongs to the ATP phosphoribosyltransferase family. Long subfamily. Equilibrium between an active dimeric form, an inactive hexameric form and higher aggregates. Interconversion between the various forms is largely reversible and is influenced by the natural substrates and inhibitors of the enzyme. Requires Mg(2+) as cofactor.

It localises to the cytoplasm. It catalyses the reaction 1-(5-phospho-beta-D-ribosyl)-ATP + diphosphate = 5-phospho-alpha-D-ribose 1-diphosphate + ATP. The protein operates within amino-acid biosynthesis; L-histidine biosynthesis; L-histidine from 5-phospho-alpha-D-ribose 1-diphosphate: step 1/9. Its activity is regulated as follows. Feedback inhibited by histidine. Catalyzes the condensation of ATP and 5-phosphoribose 1-diphosphate to form N'-(5'-phosphoribosyl)-ATP (PR-ATP). Has a crucial role in the pathway because the rate of histidine biosynthesis seems to be controlled primarily by regulation of HisG enzymatic activity. The polypeptide is ATP phosphoribosyltransferase (Escherichia coli O8 (strain IAI1)).